Here is an 84-residue protein sequence, read N- to C-terminus: Sulfur carrier protein TusA (84 aa).

Catalysis depends on cysteine 21, which acts as the Cysteine persulfide intermediate.

Belongs to the sulfur carrier protein TusA family.

It is found in the cytoplasm. Sulfur carrier protein which probably makes part of a sulfur-relay system. The polypeptide is Sulfur carrier protein TusA (Pseudomonas savastanoi pv. phaseolicola (strain 1448A / Race 6) (Pseudomonas syringae pv. phaseolicola (strain 1448A / Race 6))).